The sequence spans 347 residues: DNA-directed RNA polymerase subunit alpha (347 aa).

The interval 1–230 (MFKGFQKPKR…DHMTIFINFE (230 aa)) is alpha N-terminal domain (alpha-NTD). The alpha C-terminal domain (alpha-CTD) stretch occupies residues 247–347 (MNEVLNRSVE…EDDGQDQIGE (101 aa)). The tract at residues 320–347 (GRLVAPPPSAGGGPDFGPEDDGQDQIGE) is disordered. Residues 336–347 (GPEDDGQDQIGE) show a composition bias toward acidic residues.

This sequence belongs to the RNA polymerase alpha chain family. Homodimer. The RNAP catalytic core consists of 2 alpha, 1 beta, 1 beta' and 1 omega subunit. When a sigma factor is associated with the core the holoenzyme is formed, which can initiate transcription.

It carries out the reaction RNA(n) + a ribonucleoside 5'-triphosphate = RNA(n+1) + diphosphate. In terms of biological role, DNA-dependent RNA polymerase catalyzes the transcription of DNA into RNA using the four ribonucleoside triphosphates as substrates. In Solibacter usitatus (strain Ellin6076), this protein is DNA-directed RNA polymerase subunit alpha.